Consider the following 406-residue polypeptide: Bifunctional protein GlmU (406 aa).

Residues 1-221 (MFIILAAGHG…EEEATGINSR (221 aa)) are pyrophosphorylase. UDP-N-acetyl-alpha-D-glucosamine is bound by residues 5-8 (LAAG), lysine 19, glutamine 68, 73-74 (GT), 98-100 (YGD), glycine 134, glutamate 148, asparagine 162, and asparagine 219. Aspartate 100 lines the Mg(2+) pocket. Asparagine 219 is a binding site for Mg(2+). The linker stretch occupies residues 222–242 (NDLAKAEFYFQENRRKFFTDS). An N-acetyltransferase region spans residues 243-406 (GVTLVAPETV…RRKQMVKKIK (164 aa)). Lysine 308 contributes to the UDP-N-acetyl-alpha-D-glucosamine binding site. Residue histidine 320 is the Proton acceptor of the active site. UDP-N-acetyl-alpha-D-glucosamine contacts are provided by tyrosine 323 and asparagine 334. Acetyl-CoA is bound by residues alanine 337, 343-344 (NY), alanine 380, and arginine 397.

The protein in the N-terminal section; belongs to the N-acetylglucosamine-1-phosphate uridyltransferase family. In the C-terminal section; belongs to the transferase hexapeptide repeat family. As to quaternary structure, homotrimer. Mg(2+) is required as a cofactor.

The protein resides in the cytoplasm. The catalysed reaction is alpha-D-glucosamine 1-phosphate + acetyl-CoA = N-acetyl-alpha-D-glucosamine 1-phosphate + CoA + H(+). The enzyme catalyses N-acetyl-alpha-D-glucosamine 1-phosphate + UTP + H(+) = UDP-N-acetyl-alpha-D-glucosamine + diphosphate. It functions in the pathway nucleotide-sugar biosynthesis; UDP-N-acetyl-alpha-D-glucosamine biosynthesis; N-acetyl-alpha-D-glucosamine 1-phosphate from alpha-D-glucosamine 6-phosphate (route II): step 2/2. It participates in nucleotide-sugar biosynthesis; UDP-N-acetyl-alpha-D-glucosamine biosynthesis; UDP-N-acetyl-alpha-D-glucosamine from N-acetyl-alpha-D-glucosamine 1-phosphate: step 1/1. Its pathway is bacterial outer membrane biogenesis; LPS lipid A biosynthesis. Functionally, catalyzes the last two sequential reactions in the de novo biosynthetic pathway for UDP-N-acetylglucosamine (UDP-GlcNAc). The C-terminal domain catalyzes the transfer of acetyl group from acetyl coenzyme A to glucosamine-1-phosphate (GlcN-1-P) to produce N-acetylglucosamine-1-phosphate (GlcNAc-1-P), which is converted into UDP-GlcNAc by the transfer of uridine 5-monophosphate (from uridine 5-triphosphate), a reaction catalyzed by the N-terminal domain. The protein is Bifunctional protein GlmU of Wolbachia sp. subsp. Brugia malayi (strain TRS).